A 579-amino-acid chain; its full sequence is Trehalase (579 aa).

Positions 1–15 (MRLFLLLVGLTTVIA) are cleaved as a signal peptide. N-linked (GlcNAc...) asparagine glycans are attached at residues Asn29 and Asn58. Substrate-binding positions include Arg161, 168–169 (WD), Asn205, 214–216 (RSQ), 279–281 (RPE), and Gly313. Asn205 carries N-linked (GlcNAc...) asparagine glycosylation. Asp315 functions as the Proton donor/acceptor in the catalytic mechanism. Asn331 carries N-linked (GlcNAc...) asparagine glycosylation. The active-site Proton donor/acceptor is Glu513. Glu528 contacts substrate. Polar residues predominate over residues 560-569 (DASANNGQSN). The tract at residues 560–579 (DASANNGQSNEESETDSKEK) is disordered.

The protein belongs to the glycosyl hydrolase 37 family. In terms of tissue distribution, in midgut and Malpighian tubules.

The protein localises to the basolateral cell membrane. It catalyses the reaction alpha,alpha-trehalose + H2O = alpha-D-glucose + beta-D-glucose. Its function is as follows. Involved in uptake of hemolymph trehalose into epithelial cells in the midgut of feeding larvae. The sequence is that of Trehalase from Bombyx mori (Silk moth).